Reading from the N-terminus, the 700-residue chain is MAEGQSPENSPPSPTPPSPSSSDNQQQSSPPPSDSSSPSPPAPPPPDDSSNGSPQPPSSDSQSPPSPQGNNNNDGNNGNNNNDNNNNNNGNNNNDNNNGNNKDNNNNGNNNNGNNNNGNDNNGNNNNGNNNDNNNQNNGGGSNNRSPPPPSRNSDRNSPSPPRALAPPRSSGGGSNSSGNNEPNTAAIVGIVAGAGLLFLVMILFCVCCCRKKKKKHQMPYYAGNGYATGKGDQYQQQQYNNQSDHVMNLSQQYPGSNGNNNWMNSPPPPPPGSWQPSPPPPPPPVSGGMNGNSSDFSSNYSGPHGPSVPPPHPSVALGFNKSTFTYDELAAATQGFSQSRLLGQGGFGYVHKGILPNGKEIAVKSLKAGSGQGEREFQAEVDIISRVHHRFLVSLVGYCIAGGQRMLVYEFLPNDTLEFHLHGKSGKVLDWPTRLKIALGSAKGLAYLHEDCHPRIIHRDIKASNILLDESFEAKVADFGLAKLSQDNVTHVSTRIMGTFGYLAPEYASSGKLTDRSDVFSFGVMLLELVTGRRPVDLTGEMEDSLVDWARPICLNAAQDGDYSELVDPRLENQYEPHEMAQMVACAAAAVRHSARRRPKMSQIVRALEGDATLDDLSEGGKAGQSSFLGRGSSSDYDSSTYSADMKKFRKVALDSHEYGASSEYGNTSEYGLDPSSSSSEEIRRGGANNNKTTPSRDH.

Residues M1–N180 are disordered. Over M1 to A186 the chain is Extracellular. Pro residues-rich tracts occupy residues N9–P19 and S29–D47. Low complexity predominate over residues D48–N137. N176 is a glycosylation site (N-linked (GlcNAc...) asparagine). Residues A187 to V207 form a helical membrane-spanning segment. The Cytoplasmic portion of the chain corresponds to C208–H700. The interval N249–S315 is disordered. Residues P255–N265 show a composition bias toward low complexity. A compositionally biased stretch (pro residues) spans S266–V286. Phosphothreonine is present on T326. Residues F337–L615 enclose the Protein kinase domain. ATP is bound by residues L343–V351 and K365. The residue at position 410 (Y410) is a Phosphotyrosine. D461 (proton acceptor) is an active-site residue. S465 and S494 each carry phosphoserine. T495 and T500 each carry phosphothreonine. A Phosphotyrosine modification is found at Y508. 2 disordered regions span residues D616 to T642 and E659 to H700. A compositionally biased stretch (polar residues) spans A689–H700.

It belongs to the protein kinase superfamily. Ser/Thr protein kinase family. Mostly expressed in flower buds.

It is found in the cell membrane. It carries out the reaction L-seryl-[protein] + ATP = O-phospho-L-seryl-[protein] + ADP + H(+). The catalysed reaction is L-threonyl-[protein] + ATP = O-phospho-L-threonyl-[protein] + ADP + H(+). This is Putative proline-rich receptor-like protein kinase PERK6 (PERK6) from Arabidopsis thaliana (Mouse-ear cress).